A 469-amino-acid polypeptide reads, in one-letter code: ATP-dependent protease ATPase subunit HslU (469 aa).

Residues isoleucine 24, 66-71 (GVGKTE), aspartate 282, glutamate 347, and arginine 419 contribute to the ATP site.

The protein belongs to the ClpX chaperone family. HslU subfamily. As to quaternary structure, a double ring-shaped homohexamer of HslV is capped on each side by a ring-shaped HslU homohexamer. The assembly of the HslU/HslV complex is dependent on binding of ATP.

It is found in the cytoplasm. ATPase subunit of a proteasome-like degradation complex; this subunit has chaperone activity. The binding of ATP and its subsequent hydrolysis by HslU are essential for unfolding of protein substrates subsequently hydrolyzed by HslV. HslU recognizes the N-terminal part of its protein substrates and unfolds these before they are guided to HslV for hydrolysis. The protein is ATP-dependent protease ATPase subunit HslU of Listeria welshimeri serovar 6b (strain ATCC 35897 / DSM 20650 / CCUG 15529 / CIP 8149 / NCTC 11857 / SLCC 5334 / V8).